Consider the following 394-residue polypeptide: MKRNPHFVSLTKNYLFADLQKRVAQFRLENPQHTVINLSIGDTTQPLNASVAEAFASSIARLSSPTTCRGYGPDFGLPALRQKLSEDFYRGFVDAKEIFISDGAKVDLFRLLSFFGPNQTVAIQDPSYPAYLDIARLTGAKEIIALPCLQENAFFPEFPEDTHIDILCLCSPNNPTGTVLNKDQLRAIVHYAIEHEILILFDAAYSTFISDPSLPKSIFEIPDARFCAIEINSFSKPLGFAGIRLGWTVIPQELTYADGHFVIQDWERFLSTTFNGASIPAQEAGVAGLSILPQLEAIHYYRENSDLLRKALLATGFEVFGGEHAPYLWVKPTQANISDRDLFDFFLREYHIAITPGIGFGRSGSGFVRFSSLGKREDILAACERLQMAPALQS.

Residues Y14 and G41 each contribute to the substrate site. Pyridoxal 5'-phosphate-binding positions include Y71, 104–105 (AK), Y128, N174, Y205, and 233–235 (SFS). Residues K105, Y128, and N174 each coordinate substrate. K236 bears the N6-(pyridoxal phosphate)lysine mark. Residues R244 and N275 each coordinate pyridoxal 5'-phosphate. 2 residues coordinate substrate: N275 and R369.

It belongs to the class-I pyridoxal-phosphate-dependent aminotransferase family. LL-diaminopimelate aminotransferase subfamily. In terms of assembly, homodimer. Requires pyridoxal 5'-phosphate as cofactor.

The catalysed reaction is (2S,6S)-2,6-diaminopimelate + 2-oxoglutarate = (S)-2,3,4,5-tetrahydrodipicolinate + L-glutamate + H2O + H(+). The protein operates within amino-acid biosynthesis; L-lysine biosynthesis via DAP pathway; LL-2,6-diaminopimelate from (S)-tetrahydrodipicolinate (aminotransferase route): step 1/1. Functionally, involved in the synthesis of meso-diaminopimelate (m-DAP or DL-DAP), required for both lysine and peptidoglycan biosynthesis. Catalyzes the direct conversion of tetrahydrodipicolinate to LL-diaminopimelate. Is also able to use meso-diaminopimelate, cystathionine, lysine or ornithine as substrates. The sequence is that of LL-diaminopimelate aminotransferase from Chlamydia trachomatis serovar D (strain ATCC VR-885 / DSM 19411 / UW-3/Cx).